The chain runs to 107 residues: uncharacterized protein (107 aa).

3 consecutive transmembrane segments (helical) span residues 20–40, 49–69, and 86–106; these read FISLISSSTSELPLFVVEVGI, PAILSILVLNALEVSSFISTV, and VVMLKILAFLLLEGIIIKLFL.

The protein resides in the membrane. This is an uncharacterized protein from Saccharomyces cerevisiae (strain ATCC 204508 / S288c) (Baker's yeast).